The following is a 172-amino-acid chain: Adenine phosphoribosyltransferase (172 aa).

The protein belongs to the purine/pyrimidine phosphoribosyltransferase family. In terms of assembly, homodimer.

It localises to the cytoplasm. The enzyme catalyses AMP + diphosphate = 5-phospho-alpha-D-ribose 1-diphosphate + adenine. It participates in purine metabolism; AMP biosynthesis via salvage pathway; AMP from adenine: step 1/1. Its function is as follows. Catalyzes a salvage reaction resulting in the formation of AMP, that is energically less costly than de novo synthesis. The protein is Adenine phosphoribosyltransferase of Polynucleobacter necessarius subsp. necessarius (strain STIR1).